We begin with the raw amino-acid sequence, 695 residues long: UvrABC system protein B (695 aa).

In terms of domain architecture, Helicase ATP-binding spans 31–414; sequence EGIESGLSFQ…EIQRSGQIAE (384 aa). An ATP-binding site is contributed by 44 to 51; that stretch reads GVTGSGKT. The Beta-hairpin signature appears at 97–120; that stretch reads YYDYYQPEAYVPSRDLFIEKDSSI. Positions 435–601 constitute a Helicase C-terminal domain; it reads QVDDLMSEVS…GVNKRIKDLI (167 aa). Residues 632–667 form the UVR domain; it reads AKEIQRLEKSMLEAARNMEFEQAAQYRDEIKNLRSK.

The protein belongs to the UvrB family. In terms of assembly, forms a heterotetramer with UvrA during the search for lesions. Interacts with UvrC in an incision complex.

Its subcellular location is the cytoplasm. In terms of biological role, the UvrABC repair system catalyzes the recognition and processing of DNA lesions. A damage recognition complex composed of 2 UvrA and 2 UvrB subunits scans DNA for abnormalities. Upon binding of the UvrA(2)B(2) complex to a putative damaged site, the DNA wraps around one UvrB monomer. DNA wrap is dependent on ATP binding by UvrB and probably causes local melting of the DNA helix, facilitating insertion of UvrB beta-hairpin between the DNA strands. Then UvrB probes one DNA strand for the presence of a lesion. If a lesion is found the UvrA subunits dissociate and the UvrB-DNA preincision complex is formed. This complex is subsequently bound by UvrC and the second UvrB is released. If no lesion is found, the DNA wraps around the other UvrB subunit that will check the other stand for damage. In Nitrosomonas europaea (strain ATCC 19718 / CIP 103999 / KCTC 2705 / NBRC 14298), this protein is UvrABC system protein B.